The following is a 621-amino-acid chain: ATP-dependent lipid A-core flippase (621 aa).

5 helical membrane-spanning segments follow: residues 32 to 52 (IVAA…LAAF), 91 to 111 (VWGT…LVVI), 192 to 212 (IVLL…FPLL), 286 to 306 (SPFS…IALW), and 312 to 332 (YTTI…YAPI). Residues 33 to 344 (VAALIAIFGV…LANISIPMQT (312 aa)) enclose the ABC transmembrane type-1 domain. Positions 378 to 611 (FRNVDVEYRS…NGYYTMLRNI (234 aa)) constitute an ABC transporter domain. 410–417 (GRSGSGKS) is an ATP binding site.

It belongs to the ABC transporter superfamily. Lipid exporter (TC 3.A.1.106) family. As to quaternary structure, homodimer.

It is found in the cell inner membrane. The enzyme catalyses ATP + H2O + lipid A-core oligosaccharideSide 1 = ADP + phosphate + lipid A-core oligosaccharideSide 2.. Involved in lipopolysaccharide (LPS) biosynthesis. Translocates lipid A-core from the inner to the outer leaflet of the inner membrane. Transmembrane domains (TMD) form a pore in the inner membrane and the ATP-binding domain (NBD) is responsible for energy generation. The sequence is that of ATP-dependent lipid A-core flippase from Neisseria meningitidis serogroup A / serotype 4A (strain DSM 15465 / Z2491).